The following is a 475-amino-acid chain: NADH-quinone oxidoreductase subunit N (475 aa).

A run of 14 helical transmembrane segments spans residues leucine 5–valine 25, phenylalanine 32–methionine 52, phenylalanine 71–alanine 91, phenylalanine 99–glutamate 119, leucine 121–phenylalanine 141, tyrosine 155–glycine 175, serine 193–phenylalanine 213, proline 232–leucine 252, tryptophan 266–isoleucine 286, leucine 294–threonine 314, leucine 322–methionine 342, alanine 366–phenylalanine 386, methionine 389–valine 409, and leucine 439–leucine 459.

This sequence belongs to the complex I subunit 2 family. NDH-1 is composed of 14 different subunits. Subunits NuoA, H, J, K, L, M, N constitute the membrane sector of the complex.

The protein resides in the cell inner membrane. It carries out the reaction a quinone + NADH + 5 H(+)(in) = a quinol + NAD(+) + 4 H(+)(out). In terms of biological role, NDH-1 shuttles electrons from NADH, via FMN and iron-sulfur (Fe-S) centers, to quinones in the respiratory chain. The immediate electron acceptor for the enzyme in this species is believed to be ubiquinone. Couples the redox reaction to proton translocation (for every two electrons transferred, four hydrogen ions are translocated across the cytoplasmic membrane), and thus conserves the redox energy in a proton gradient. The polypeptide is NADH-quinone oxidoreductase subunit N (Gluconacetobacter diazotrophicus (strain ATCC 49037 / DSM 5601 / CCUG 37298 / CIP 103539 / LMG 7603 / PAl5)).